A 206-amino-acid chain; its full sequence is Small ribosomal subunit protein uS2 (206 aa).

The protein belongs to the universal ribosomal protein uS2 family.

This Pyrobaculum neutrophilum (strain DSM 2338 / JCM 9278 / NBRC 100436 / V24Sta) (Thermoproteus neutrophilus) protein is Small ribosomal subunit protein uS2.